Here is a 982-residue protein sequence, read N- to C-terminus: Glycine dehydrogenase (decarboxylating) (982 aa).

Position 729 is an N6-(pyridoxal phosphate)lysine (Lys-729).

It belongs to the GcvP family. In terms of assembly, the glycine cleavage system is composed of four proteins: P, T, L and H. Pyridoxal 5'-phosphate is required as a cofactor.

It carries out the reaction N(6)-[(R)-lipoyl]-L-lysyl-[glycine-cleavage complex H protein] + glycine + H(+) = N(6)-[(R)-S(8)-aminomethyldihydrolipoyl]-L-lysyl-[glycine-cleavage complex H protein] + CO2. Functionally, the glycine cleavage system catalyzes the degradation of glycine. The P protein binds the alpha-amino group of glycine through its pyridoxal phosphate cofactor; CO(2) is released and the remaining methylamine moiety is then transferred to the lipoamide cofactor of the H protein. The protein is Glycine dehydrogenase (decarboxylating) of Ralstonia nicotianae (strain ATCC BAA-1114 / GMI1000) (Ralstonia solanacearum).